A 212-amino-acid chain; its full sequence is NAD(P)H dehydrogenase (quinone) 3 (212 aa).

The region spanning 4 to 192 (MLVLYYSSYG…DGARFQGRHV (189 aa)) is the Flavodoxin-like domain. Residues 10–15 (SSYGHI) and 78–80 (TRF) each bind FMN. An NAD(+)-binding site is contributed by Tyr12. Trp98 provides a ligand contact to substrate. Residues 113 to 119 (STGSQHG) and His134 each bind FMN. Residues 161–182 (YGASTLAEDENHRDRSPSANEL) are disordered.

This sequence belongs to the WrbA family. Requires FMN as cofactor.

It carries out the reaction a quinone + NADH + H(+) = a quinol + NAD(+). It catalyses the reaction a quinone + NADPH + H(+) = a quinol + NADP(+). The polypeptide is NAD(P)H dehydrogenase (quinone) 3 (Rhizobium meliloti (strain 1021) (Ensifer meliloti)).